A 1413-amino-acid chain; its full sequence is DNA-directed RNA polymerase subunit beta' (1413 aa).

Positions 70, 72, 85, and 88 each coordinate Zn(2+). Residues Asp-460, Asp-462, and Asp-464 each contribute to the Mg(2+) site. Residues Cys-819, Cys-893, Cys-900, and Cys-903 each coordinate Zn(2+).

Belongs to the RNA polymerase beta' chain family. The RNAP catalytic core consists of 2 alpha, 1 beta, 1 beta' and 1 omega subunit. When a sigma factor is associated with the core the holoenzyme is formed, which can initiate transcription. It depends on Mg(2+) as a cofactor. The cofactor is Zn(2+).

It catalyses the reaction RNA(n) + a ribonucleoside 5'-triphosphate = RNA(n+1) + diphosphate. In terms of biological role, DNA-dependent RNA polymerase catalyzes the transcription of DNA into RNA using the four ribonucleoside triphosphates as substrates. The chain is DNA-directed RNA polymerase subunit beta' from Burkholderia vietnamiensis (strain G4 / LMG 22486) (Burkholderia cepacia (strain R1808)).